We begin with the raw amino-acid sequence, 322 residues long: Undecaprenyl-phosphate 4-deoxy-4-formamido-L-arabinose transferase (322 aa).

Topologically, residues methionine 1–methionine 235 are cytoplasmic. Residues leucine 236–isoleucine 256 traverse the membrane as a helical segment. The Periplasmic segment spans residues leucine 257–glycine 269. A helical transmembrane segment spans residues valine 270 to leucine 290. Over leucine 291–glutamate 322 the chain is Cytoplasmic.

This sequence belongs to the glycosyltransferase 2 family.

The protein resides in the cell inner membrane. The catalysed reaction is UDP-4-deoxy-4-formamido-beta-L-arabinose + di-trans,octa-cis-undecaprenyl phosphate = 4-deoxy-4-formamido-alpha-L-arabinopyranosyl di-trans,octa-cis-undecaprenyl phosphate + UDP. The protein operates within glycolipid biosynthesis; 4-amino-4-deoxy-alpha-L-arabinose undecaprenyl phosphate biosynthesis; 4-amino-4-deoxy-alpha-L-arabinose undecaprenyl phosphate from UDP-4-deoxy-4-formamido-beta-L-arabinose and undecaprenyl phosphate: step 1/2. Its pathway is bacterial outer membrane biogenesis; lipopolysaccharide biosynthesis. Its function is as follows. Catalyzes the transfer of 4-deoxy-4-formamido-L-arabinose from UDP to undecaprenyl phosphate. The modified arabinose is attached to lipid A and is required for resistance to polymyxin and cationic antimicrobial peptides. In Shigella sonnei (strain Ss046), this protein is Undecaprenyl-phosphate 4-deoxy-4-formamido-L-arabinose transferase.